The sequence spans 164 residues: Phosphohistidine phosphatase SixA homolog (164 aa).

Belongs to the SixA phosphatase family.

This Haemophilus influenzae (strain ATCC 51907 / DSM 11121 / KW20 / Rd) protein is Phosphohistidine phosphatase SixA homolog (sixA-A).